The following is a 1764-amino-acid chain: Latent-transforming growth factor beta-binding protein 2 (1764 aa).

An N-terminal signal peptide occupies residues 1 to 35 (MRAPTTVRCSGRIQRARWRGFLPLVLALLMGTSHA). Residues 80-140 (PGLSPSEWNQ…PPAARTAHSV (61 aa)) are disordered. A heparin-binding region spans residues 94-115 (IPGRLAEAEARRPSRAQQLRRV). The segment covering 108–128 (RAQQLRRVQSPVQTRRSNPRG) has biased composition (polar residues). N-linked (GlcNAc...) asparagine glycosylation is present at N175. The EGF-like 1 domain occupies 181–213 (IKPVCQPPCQNRGSCSRPQLCICRSGFRGARCE). 3 disulfides stabilise this stretch: C185/C195, C189/C201, and C203/C212. The segment at 220-279 (EFDPQNARPVPRRSVEGAPGPHRSSEARGSLVTRIQPLLPPLPPPPSRTLSQTRPLQQHA) is disordered. The segment at 226–243 (ARPVPRRSVEGAPGPHRS) is heparin-binding. The segment covering 257 to 266 (LLPPLPPPPS) has biased composition (pro residues). Residue N330 is glycosylated (N-linked (GlcNAc...) asparagine). 331 to 341 (LTEKIKKIKVV) serves as a coordination point for heparin. In terms of domain architecture, EGF-like 2 spans 383–415 (RIYFCQIPCLNGGRCIGRDECWCPANSTGKFCH). Disulfide bonds link C387–C397, C391–C403, and C405–C414. An N-linked (GlcNAc...) asparagine glycan is attached at N408. The segment at 484–529 (EVDPVPEDNSVETRASHRPHGSSGHSHWASNSIPARAGEAPRPPPV) is disordered. Position 493 is a phosphoserine (S493). The 53-residue stretch at 538–590 (GQCYLSTVNGQCANPLGELTSQEDCCGSVGTSWGVTSCAPCPPRPAFPVIENG) folds into the TB 1 domain. Cystine bridges form between C540/C562, C549/C575, and C563/C578. N602 is a glycosylation site (N-linked (GlcNAc...) asparagine). The EGF-like 3; calcium-binding domain maps to 608–648 (DINECLTLGLCKDSECVNTRGSYLCTCRPGLMLDPSRSRCV). 7 disulfides stabilise this stretch: C612–C623, C618–C632, C634–C647, C660–C682, C669–C695, C683–C698, and C684–C710. In terms of domain architecture, TB 2 spans 658–710 (GLCYRSMVSGTCTLPLVQRITKQICCCSRVGKAWGSKCEHCPLPGTEAFREIC). Disordered stretches follow at residues 729-759 (KAEE…RQPL) and 786-809 (SAPH…LPGQ). One can recognise an EGF-like 4 domain in the interval 834–876 (GFDPCFAGASNICGPGTCVKLPNGYRCVCSPGYQLHPSQDYCT). Intrachain disulfides connect C838–C851, C846–C860, C862–C875, C881–C892, C886–C901, C903–C918, C924–C935, C930–C944, C946–C958, C964–C975, C970–C984, C987–C998, C1004–C1015, C1010–C1024, C1026–C1039, C1045–C1056, C1051–C1065, C1068–C1081, C1087–C1098, C1093–C1107, C1110–C1123, C1129–C1141, C1136–C1150, C1152–C1164, C1170–C1182, C1176–C1191, C1193–C1206, C1212–C1223, C1218–C1232, C1234–C1247, C1253–C1265, C1259–C1274, C1276–C1289, C1295–C1307, C1302–C1316, C1318–C1332, C1359–C1382, C1369–C1394, C1383–C1397, C1435–C1448, C1443–C1457, C1459–C1472, C1478–C1488, C1483–C1497, and C1499–C1512. Residues 877–919 (DDNECLRNPCEGRGRCVNSVGSYSCLCYPGYTLATLGDTQECQ) enclose the EGF-like 5; calcium-binding domain. One can recognise an EGF-like 6; calcium-binding domain in the interval 920 to 959 (DVDECEQPGVCSGGRCSNTEGSYHCECDQGYVMVRRGHCQ). The EGF-like 7; calcium-binding domain maps to 960-999 (DINECRHPGTCPDGRCVNSPGSYTCLACEEGYIGQSGNCV). Residues 1000 to 1040 (DMNECLTPGICAHGRCINMEGSFRCSCEPGYELTPDKKGCR) form the EGF-like 8; calcium-binding domain. In terms of domain architecture, EGF-like 9; calcium-binding spans 1041 to 1082 (DVDECASRASCPTGLCLNTEGSFTCSACQSGYWVNEDGTACE). Residues 1083–1124 (DLDECAFPGVCPTGVCTNTVGSFSCKDCDRGFRPSPLGNSCE) enclose the EGF-like 10; calcium-binding domain. An EGF-like 11; calcium-binding domain is found at 1125 to 1165 (DVDECEGPQNSCLGGECKNTDGSYQCLCPQGFQLANGTVCE). Residue N1160 is glycosylated (N-linked (GlcNAc...) asparagine). The EGF-like 12; calcium-binding domain occupies 1166 to 1207 (DVDECVGEEHCAPHGECLNSPGSFFCLCAPGFASAEGGTRCQ). The EGF-like 13; calcium-binding domain occupies 1208-1248 (DVDECATTEPCLGGHCVNTEGSFNCLCETGFQPAPDSGECV). The EGF-like 15; calcium-binding domain maps to 1249 to 1290 (DIDECANDTVCGNHGFCDNTDGSFRCLCDQGFETSPSGWECV). N-linked (GlcNAc...) asparagine glycosylation is present at N1255. Positions 1291–1333 (DVNECELMLAVCGDALCENVEGSFLCLCASDLEEYDAEEGHCR) constitute an EGF-like 16; calcium-binding domain. The region spanning 1357–1409 (MECYAEHNGGPPCSQILGQNSTQAECCSTQGARWGETCDPCPSEDSVEFSELC) is the TB 3 domain. An N-linked (GlcNAc...) asparagine glycan is attached at N1376. The 43-residue stretch at 1431-1473 (DADECILFGPALCQNGRCLNTVPGYICLCNPGYHYDAVSRKCQ) folds into the EGF-like 17; calcium-binding domain. The region spanning 1474–1513 (DHNECQDLACENGECVNTEGSFHCFCSPPLILDLSGQRCV) is the EGF-like 18; calcium-binding domain. A glycan (N-linked (GlcNAc...) asparagine) is linked at N1514. Positions 1530-1582 (DICWKKVTNDVCSQPLRGHHTTYTECCCQDGEAWSQQCALCPPRSSEVYAQLC) constitute a TB 4 domain. Intrachain disulfides connect C1532–C1555, C1541–C1567, C1556–C1570, C1557–C1582, C1680–C1691, C1686–C1700, C1702–C1715, C1721–C1736, C1731–C1745, and C1747–C1760. Residues 1585-1764 (ARIEAEREAG…PGPPHCAAKE (180 aa)) are C-terminal domain. The region spanning 1676 to 1716 (QAEECGILNGCENGRCVRVREGYTCDCFEGFQLDTALMACV) is the EGF-like 19; calcium-binding domain. One can recognise an EGF-like 20; calcium-binding domain in the interval 1717-1761 (DVNECEDLNGAARLCAHGHCENTEGSYRCHCSPGYVAEPGPPHCA).

This sequence belongs to the LTBP family. Forms part of the large latent transforming growth factor beta precursor complex; removal is essential for activation of complex. Interacts with SDC4. Interacts (via C-terminal domain) with FBN1 (via N-terminal domain) in a Ca(+2)-dependent manner. In terms of processing, N-Glycosylated. Contains hydroxylated asparagine residues. Expressed in cortical astrocytes and glioma cells. Expression is up-regulated by TGFB1.

The protein resides in the secreted. Its subcellular location is the extracellular space. It localises to the extracellular matrix. Functionally, may play an integral structural role in elastic-fiber architectural organization and/or assembly. In Rattus norvegicus (Rat), this protein is Latent-transforming growth factor beta-binding protein 2 (Ltbp2).